We begin with the raw amino-acid sequence, 592 residues long: NADH-quinone oxidoreductase subunit C/D (592 aa).

The interval 1-183 is NADH dehydrogenase I subunit C; that stretch reads MSAAQSPTAQ…DPYTLTVEGQ (183 aa). Residues 207–592 are NADH dehydrogenase I subunit D; that stretch reads DYMFLNLGPN…IDFVMADVDR (386 aa).

In the N-terminal section; belongs to the complex I 30 kDa subunit family. The protein in the C-terminal section; belongs to the complex I 49 kDa subunit family. NDH-1 is composed of 13 different subunits. Subunits NuoB, CD, E, F, and G constitute the peripheral sector of the complex.

It is found in the cell inner membrane. The enzyme catalyses a quinone + NADH + 5 H(+)(in) = a quinol + NAD(+) + 4 H(+)(out). NDH-1 shuttles electrons from NADH, via FMN and iron-sulfur (Fe-S) centers, to quinones in the respiratory chain. The immediate electron acceptor for the enzyme in this species is believed to be ubiquinone. Couples the redox reaction to proton translocation (for every two electrons transferred, four hydrogen ions are translocated across the cytoplasmic membrane), and thus conserves the redox energy in a proton gradient. This chain is NADH-quinone oxidoreductase subunit C/D, found in Chromohalobacter salexigens (strain ATCC BAA-138 / DSM 3043 / CIP 106854 / NCIMB 13768 / 1H11).